A 1203-amino-acid chain; its full sequence is DNA-directed RNA polymerase subunit beta (1203 aa).

Residues 1174 to 1195 show a composition bias toward basic and acidic residues; that stretch reads AAQEAKAAFEAEEAEKATKAEA. The tract at residues 1174 to 1203 is disordered; it reads AAQEAKAAFEAEEAEKATKAEATEEAAEQE.

This sequence belongs to the RNA polymerase beta chain family. As to quaternary structure, the RNAP catalytic core consists of 2 alpha, 1 beta, 1 beta' and 1 omega subunit. When a sigma factor is associated with the core the holoenzyme is formed, which can initiate transcription.

It catalyses the reaction RNA(n) + a ribonucleoside 5'-triphosphate = RNA(n+1) + diphosphate. In terms of biological role, DNA-dependent RNA polymerase catalyzes the transcription of DNA into RNA using the four ribonucleoside triphosphates as substrates. The sequence is that of DNA-directed RNA polymerase subunit beta from Streptococcus pneumoniae (strain ATCC 700669 / Spain 23F-1).